The primary structure comprises 487 residues: uncharacterized protein (487 aa).

Belongs to the UbiD family.

This is an uncharacterized protein from Aeropyrum pernix (strain ATCC 700893 / DSM 11879 / JCM 9820 / NBRC 100138 / K1).